We begin with the raw amino-acid sequence, 313 residues long: ADP-L-glycero-D-manno-heptose-6-epimerase (313 aa).

NADP(+) is bound by residues 10-11 (MI), 31-32 (DN), K38, R53, 75-79 (EGACS), and N92. The Proton acceptor role is filled by Y139. K143 provides a ligand contact to NADP(+). N174 contacts substrate. NADP(+) contacts are provided by V175 and K183. The Proton acceptor role is filled by K183. Substrate contacts are provided by residues S185, H192, 206 to 209 (FAGS), R214, and Y277.

The protein belongs to the NAD(P)-dependent epimerase/dehydratase family. HldD subfamily. As to quaternary structure, homopentamer. NADP(+) serves as cofactor.

The enzyme catalyses ADP-D-glycero-beta-D-manno-heptose = ADP-L-glycero-beta-D-manno-heptose. Its pathway is nucleotide-sugar biosynthesis; ADP-L-glycero-beta-D-manno-heptose biosynthesis; ADP-L-glycero-beta-D-manno-heptose from D-glycero-beta-D-manno-heptose 7-phosphate: step 4/4. In terms of biological role, catalyzes the interconversion between ADP-D-glycero-beta-D-manno-heptose and ADP-L-glycero-beta-D-manno-heptose via an epimerization at carbon 6 of the heptose. This chain is ADP-L-glycero-D-manno-heptose-6-epimerase, found in Vibrio campbellii (strain ATCC BAA-1116).